A 248-amino-acid polypeptide reads, in one-letter code: N-acylneuraminate-9-phosphatase (248 aa).

Position 12 (Asp-12) interacts with Mg(2+). Phosphate contacts are provided by Leu-13, Asp-14, Thr-131, Asn-132, and Lys-164. Asp-14 is a Mg(2+) binding site. Asp-189 is a Mg(2+) binding site.

It belongs to the HAD-like hydrolase superfamily. NANP family. Requires Mg(2+) as cofactor.

It catalyses the reaction N-acetylneuraminate 9-phosphate + H2O = N-acetylneuraminate + phosphate. It carries out the reaction N-glycoloylneuraminate 9-phosphate + H2O = N-glycoloylneuraminate + phosphate. It participates in amino-sugar metabolism; N-acetylneuraminate biosynthesis. Inhibited by calcium. Inhibited by vanadate, sodium orthovanadate and phosphonate. Catalyzes the dephosphorylation of N-acylneuraminate 9-phosphate (Neu5Ac-9-P) to N-acetylneuraminic acid (Neu5Ac or sialic acid). Can also use N-glycoloylneuraminate 9-phosphate as substrate. The chain is N-acylneuraminate-9-phosphatase from Rattus norvegicus (Rat).